A 396-amino-acid chain; its full sequence is Pyruvate synthase subunit PorA (396 aa).

In terms of assembly, heterotetramer of one alpha, one beta, one delta and one gamma chain.

It carries out the reaction 2 oxidized [2Fe-2S]-[ferredoxin] + pyruvate + CoA = 2 reduced [2Fe-2S]-[ferredoxin] + acetyl-CoA + CO2 + H(+). The sequence is that of Pyruvate synthase subunit PorA (porA) from Pyrococcus furiosus (strain ATCC 43587 / DSM 3638 / JCM 8422 / Vc1).